We begin with the raw amino-acid sequence, 634 residues long: Probable potassium transport system protein Kup (634 aa).

The next 12 membrane-spanning stretches (helical) occupy residues 19 to 39, 62 to 82, 113 to 133, 150 to 170, 177 to 197, 225 to 245, 259 to 279, 291 to 311, 349 to 369, 379 to 399, 406 to 426, and 431 to 451; these read AIGL…TSPL, VLSL…VIFV, FVVV…MITP, GLEH…FLIQ, IGIL…ALGV, IGVA…ALYA, WFLL…ATIL, LLAP…ATVI, IYIG…VLGF, YGVA…VVIW, LWLG…FFAA, and VIQG…LMST.

The protein belongs to the HAK/KUP transporter (TC 2.A.72) family.

It is found in the cell inner membrane. It catalyses the reaction K(+)(in) + H(+)(in) = K(+)(out) + H(+)(out). In terms of biological role, transport of potassium into the cell. Likely operates as a K(+):H(+) symporter. The chain is Probable potassium transport system protein Kup from Pseudomonas aeruginosa (strain LESB58).